We begin with the raw amino-acid sequence, 305 residues long: UPF0282 protein Tneu_0934 (305 aa).

The protein belongs to the UPF0282 family.

This is UPF0282 protein Tneu_0934 from Pyrobaculum neutrophilum (strain DSM 2338 / JCM 9278 / NBRC 100436 / V24Sta) (Thermoproteus neutrophilus).